Consider the following 214-residue polypeptide: Holliday junction branch migration complex subunit RuvA (214 aa).

The interval 1–63 is domain I; sequence MISSLRGTVL…EDSLTLFGFP (63 aa). Residues 64 to 139 are domain II; it reads GPDELRAFEL…KLFVTQPRTR (76 aa). The flexible linker stretch occupies residues 139 to 143; it reads RSASS. The interval 144 to 214 is domain III; the sequence is AASTVTADVV…APAAAQAADR (71 aa).

This sequence belongs to the RuvA family. In terms of assembly, homotetramer. Forms an RuvA(8)-RuvB(12)-Holliday junction (HJ) complex. HJ DNA is sandwiched between 2 RuvA tetramers; dsDNA enters through RuvA and exits via RuvB. An RuvB hexamer assembles on each DNA strand where it exits the tetramer. Each RuvB hexamer is contacted by two RuvA subunits (via domain III) on 2 adjacent RuvB subunits; this complex drives branch migration. In the full resolvosome a probable DNA-RuvA(4)-RuvB(12)-RuvC(2) complex forms which resolves the HJ.

Its subcellular location is the cytoplasm. Functionally, the RuvA-RuvB-RuvC complex processes Holliday junction (HJ) DNA during genetic recombination and DNA repair, while the RuvA-RuvB complex plays an important role in the rescue of blocked DNA replication forks via replication fork reversal (RFR). RuvA specifically binds to HJ cruciform DNA, conferring on it an open structure. The RuvB hexamer acts as an ATP-dependent pump, pulling dsDNA into and through the RuvAB complex. HJ branch migration allows RuvC to scan DNA until it finds its consensus sequence, where it cleaves and resolves the cruciform DNA. In Clavibacter sepedonicus (Clavibacter michiganensis subsp. sepedonicus), this protein is Holliday junction branch migration complex subunit RuvA.